A 312-amino-acid polypeptide reads, in one-letter code: Mas-related G-protein coupled receptor member E (312 aa).

The Extracellular segment spans residues Met1–Asp20. The helical transmembrane segment at Val21–Gly41 threads the bilayer. Residues Asn42–Ala59 are Cytoplasmic-facing. The helical transmembrane segment at Ile60–Ile80 threads the bilayer. Residues Val81–Cys106 lie on the Extracellular side of the membrane. Residues Tyr107–Phe127 form a helical membrane-spanning segment. Residues Pro128 to Thr141 are Cytoplasmic-facing. The helical transmembrane segment at Cys142–Cys162 threads the bilayer. The Extracellular portion of the chain corresponds to Thr163–Thr176. Residues Leu177–Leu197 form a helical membrane-spanning segment. The Cytoplasmic portion of the chain corresponds to Met198–Gly217. A helical transmembrane segment spans residues Leu218–Leu238. The Extracellular portion of the chain corresponds to Ser239 to Asn241. A helical membrane pass occupies residues Leu242–Cys262. Topologically, residues Ala263–Ala312 are cytoplasmic.

This sequence belongs to the G-protein coupled receptor 1 family. Mas subfamily.

The protein localises to the cell membrane. Functionally, orphan receptor. May regulate nociceptor function and/or development, including the sensation or modulation of pain. This Homo sapiens (Human) protein is Mas-related G-protein coupled receptor member E (MRGPRE).